A 329-amino-acid polypeptide reads, in one-letter code: Porphobilinogen deaminase (329 aa).

An S-(dipyrrolylmethanemethyl)cysteine modification is found at C250.

The protein belongs to the HMBS family. Monomer. It depends on dipyrromethane as a cofactor.

The catalysed reaction is 4 porphobilinogen + H2O = hydroxymethylbilane + 4 NH4(+). It functions in the pathway porphyrin-containing compound metabolism; protoporphyrin-IX biosynthesis; coproporphyrinogen-III from 5-aminolevulinate: step 2/4. Tetrapolymerization of the monopyrrole PBG into the hydroxymethylbilane pre-uroporphyrinogen in several discrete steps. This is Porphobilinogen deaminase from Burkholderia thailandensis (strain ATCC 700388 / DSM 13276 / CCUG 48851 / CIP 106301 / E264).